A 655-amino-acid chain; its full sequence is p-hydroxybenzoic acid efflux pump subunit AaeB (655 aa).

11 helical membrane-spanning segments follow: residues F13–L33, W38–P58, L69–I89, L93–V113, W121–L141, E152–I172, L370–V390, F407–P427, Q431–V451, M459–F479, and F482–L502.

This sequence belongs to the aromatic acid exporter ArAE (TC 2.A.85) family.

It is found in the cell inner membrane. In terms of biological role, forms an efflux pump with AaeA. Could function as a metabolic relief valve, allowing to eliminate certain compounds when they accumulate to high levels in the cell. The chain is p-hydroxybenzoic acid efflux pump subunit AaeB from Escherichia coli (strain K12 / MC4100 / BW2952).